Consider the following 990-residue polypeptide: Membrane alanyl aminopeptidase (990 aa).

Residues 1–15 (FTIFLGVALLQGVLT) form the signal peptide. A propeptide spans 16–35 (LSPIPVPEEEWAEFSRMLRD) (activation peptide). N295 carries N-linked (GlcNAc...) asparagine glycosylation. 321 to 325 (GAMEN) is a substrate binding site. H357 lines the Zn(2+) pocket. The active-site Proton acceptor is E358. Positions 361 and 380 each coordinate Zn(2+). N609, N623, and N752 each carry an N-linked (GlcNAc...) asparagine glycan. The GPI-anchor amidated glycine moiety is linked to residue G968. Residues 969 to 990 (SGNIAALSVVSLLVTLAINMVA) constitute a propeptide, removed in mature form.

Belongs to the peptidase M1 family. Zn(2+) is required as a cofactor. As to expression, midgut brush-border membrane.

Its subcellular location is the cell membrane. Binds to the B.thuringiensis toxin, CryIA(C). In Manduca sexta (Tobacco hawkmoth), this protein is Membrane alanyl aminopeptidase.